Reading from the N-terminus, the 92-residue chain is Integration host factor subunit beta (92 aa).

The protein belongs to the bacterial histone-like protein family. As to quaternary structure, heterodimer of an alpha and a beta chain.

Its function is as follows. This protein is one of the two subunits of integration host factor, a specific DNA-binding protein that functions in genetic recombination as well as in transcriptional and translational control. The chain is Integration host factor subunit beta from Bartonella tribocorum (strain CIP 105476 / IBS 506).